A 354-amino-acid chain; its full sequence is tRNA N6-adenosine threonylcarbamoyltransferase (354 aa).

Fe cation is bound by residues His111 and His115. Substrate-binding positions include 134–138 (LVSGG), Asp167, Gly180, and Asn279. Fe cation is bound at residue Asp319.

It belongs to the KAE1 / TsaD family. It depends on Fe(2+) as a cofactor.

Its subcellular location is the cytoplasm. The enzyme catalyses L-threonylcarbamoyladenylate + adenosine(37) in tRNA = N(6)-L-threonylcarbamoyladenosine(37) in tRNA + AMP + H(+). Functionally, required for the formation of a threonylcarbamoyl group on adenosine at position 37 (t(6)A37) in tRNAs that read codons beginning with adenine. Is involved in the transfer of the threonylcarbamoyl moiety of threonylcarbamoyl-AMP (TC-AMP) to the N6 group of A37, together with TsaE and TsaB. TsaD likely plays a direct catalytic role in this reaction. The polypeptide is tRNA N6-adenosine threonylcarbamoyltransferase (Neisseria meningitidis serogroup A / serotype 4A (strain DSM 15465 / Z2491)).